The chain runs to 547 residues: Probable pectinesterase/pectinesterase inhibitor 12 (547 aa).

The signal sequence occupies residues 1–23 (MALSSFNLSSLLFLLFFTPSVFS). The interval 31 to 185 (NPHETSATSF…YKHISNSLSA (155 aa)) is pectinesterase inhibitor 12. Residues N131, N247, N260, and N303 are each glycosylated (N-linked (GlcNAc...) asparagine). A pectinesterase 12 region spans residues 237 to 533 (SLVVAADGTG…FTATEFITGD (297 aa)). Positions 312 and 342 each coordinate substrate. Catalysis depends on D365, which acts as the Proton donor; for pectinesterase activity. The cysteines at positions 379 and 399 are disulfide-linked. D386 (nucleophile; for pectinesterase activity) is an active-site residue. Residues N432 and N443 are each glycosylated (N-linked (GlcNAc...) asparagine). 2 residues coordinate substrate: R454 and W456. An N-linked (GlcNAc...) asparagine glycan is attached at N523.

This sequence in the N-terminal section; belongs to the PMEI family. It in the C-terminal section; belongs to the pectinesterase family. As to expression, expressed in siliques.

It localises to the secreted. It is found in the cell wall. The enzyme catalyses [(1-&gt;4)-alpha-D-galacturonosyl methyl ester](n) + n H2O = [(1-&gt;4)-alpha-D-galacturonosyl](n) + n methanol + n H(+). The protein operates within glycan metabolism; pectin degradation; 2-dehydro-3-deoxy-D-gluconate from pectin: step 1/5. Acts in the modification of cell walls via demethylesterification of cell wall pectin. This chain is Probable pectinesterase/pectinesterase inhibitor 12 (PME12), found in Arabidopsis thaliana (Mouse-ear cress).